Here is a 429-residue protein sequence, read N- to C-terminus: 3-phosphoshikimate 1-carboxyvinyltransferase (429 aa).

3-phosphoshikimate is bound by residues K25, S26, and R30. K25 provides a ligand contact to phosphoenolpyruvate. Residues G99 and R127 each coordinate phosphoenolpyruvate. Positions 173, 174, 175, 201, 317, 340, and 344 each coordinate 3-phosphoshikimate. Position 175 (Q175) interacts with phosphoenolpyruvate. The Proton acceptor role is filled by D317. Phosphoenolpyruvate is bound by residues R348, R390, and K415.

It belongs to the EPSP synthase family. Monomer.

Its subcellular location is the cytoplasm. It carries out the reaction 3-phosphoshikimate + phosphoenolpyruvate = 5-O-(1-carboxyvinyl)-3-phosphoshikimate + phosphate. Its pathway is metabolic intermediate biosynthesis; chorismate biosynthesis; chorismate from D-erythrose 4-phosphate and phosphoenolpyruvate: step 6/7. Functionally, catalyzes the transfer of the enolpyruvyl moiety of phosphoenolpyruvate (PEP) to the 5-hydroxyl of shikimate-3-phosphate (S3P) to produce enolpyruvyl shikimate-3-phosphate and inorganic phosphate. In Pseudoalteromonas atlantica (strain T6c / ATCC BAA-1087), this protein is 3-phosphoshikimate 1-carboxyvinyltransferase.